The chain runs to 97 residues: uncharacterized protein (97 aa).

The protein belongs to the mycobacterial PE family.

Functionally, part of the ESX-1 / type VII specialized secretion system (T7SS), which exports several proteins including EsxA and EsxB. Plays a role in DNA conjugation, in at least a donor strain. This is an uncharacterized protein from Mycolicibacterium smegmatis (strain ATCC 700084 / mc(2)155) (Mycobacterium smegmatis).